The chain runs to 233 residues: Protein Mis18-alpha (233 aa).

3 positions are modified to phosphoserine: serine 36, serine 39, and serine 40. Residues 80 to 178 (PLVFLCSGCR…NVEAVESYVL (99 aa)) form the Mis18 domain. Residues cysteine 85, cysteine 88, cysteine 141, and cysteine 144 each coordinate Zn(2+). A Glycyl lysine isopeptide (Lys-Gly) (interchain with G-Cter in SUMO2) cross-link involves residue lysine 162. At serine 233 the chain carries Phosphoserine.

The protein belongs to the mis18 family. As to quaternary structure, homodimer, and heterodimer with OIP5/MIS18B. Identified in a complex containing MIS18A, OIP5/MIS18B, MIS18BP1, RBBP7 and RBBP4.

It localises to the nucleus. The protein localises to the chromosome. The protein resides in the centromere. Required for recruitment of CENPA to centromeres and normal chromosome segregation during mitosis. This is Protein Mis18-alpha (MIS18A) from Plecturocebus moloch (Dusky titi monkey).